Here is a 128-residue protein sequence, read N- to C-terminus: Ribosome-binding factor A (128 aa).

This sequence belongs to the RbfA family. Monomer. Binds 30S ribosomal subunits, but not 50S ribosomal subunits or 70S ribosomes.

It is found in the cytoplasm. Its function is as follows. One of several proteins that assist in the late maturation steps of the functional core of the 30S ribosomal subunit. Associates with free 30S ribosomal subunits (but not with 30S subunits that are part of 70S ribosomes or polysomes). Required for efficient processing of 16S rRNA. May interact with the 5'-terminal helix region of 16S rRNA. The protein is Ribosome-binding factor A of Saccharophagus degradans (strain 2-40 / ATCC 43961 / DSM 17024).